The chain runs to 701 residues: Elongation factor G (701 aa).

The tr-type G domain occupies 11-287; the sequence is SRVRNFGIMA…AVVDYLPSPL (277 aa). GTP-binding positions include 20 to 27, 84 to 88, and 138 to 141; these read AHIDAGKT, DTPGH, and NKMD.

The protein belongs to the TRAFAC class translation factor GTPase superfamily. Classic translation factor GTPase family. EF-G/EF-2 subfamily.

It is found in the cytoplasm. Its function is as follows. Catalyzes the GTP-dependent ribosomal translocation step during translation elongation. During this step, the ribosome changes from the pre-translocational (PRE) to the post-translocational (POST) state as the newly formed A-site-bound peptidyl-tRNA and P-site-bound deacylated tRNA move to the P and E sites, respectively. Catalyzes the coordinated movement of the two tRNA molecules, the mRNA and conformational changes in the ribosome. This Mycobacterium tuberculosis (strain CDC 1551 / Oshkosh) protein is Elongation factor G (fusA).